The following is a 319-amino-acid chain: Transmembrane and ubiquitin-like domain-containing protein 2 (319 aa).

Residues 36–56 form a helical membrane-spanning segment; the sequence is VMVVAGVVALTLALVLAWLST. Disordered regions lie at residues 88–128 and 145–165; these read VNQG…ARGE and RQAGLGSSRPEAPLGLDDGSC. Basic and acidic residues predominate over residues 95 to 111; that stretch reads PTEHPHPSGGNDDKAEE. The Ubiquitin-like domain maps to 173 to 246; sequence INVRLKFLND…IHCHRSPPGA (74 aa). Helical transmembrane passes span 264 to 284 and 298 to 318; these read LGVNVGSLMVPVFVVLLGVVW and ATISLVGVTVFFSILVFGMYG.

Its subcellular location is the membrane. The chain is Transmembrane and ubiquitin-like domain-containing protein 2 (Tmub2) from Mus musculus (Mouse).